The primary structure comprises 132 residues: Small ribosomal subunit protein uS8 (132 aa).

It belongs to the universal ribosomal protein uS8 family. In terms of assembly, part of the 30S ribosomal subunit. Contacts proteins S5 and S12.

Its function is as follows. One of the primary rRNA binding proteins, it binds directly to 16S rRNA central domain where it helps coordinate assembly of the platform of the 30S subunit. This is Small ribosomal subunit protein uS8 from Oceanobacillus iheyensis (strain DSM 14371 / CIP 107618 / JCM 11309 / KCTC 3954 / HTE831).